The chain runs to 130 residues: Glycine cleavage system H protein (130 aa).

Positions 24-106 constitute a Lipoyl-binding domain; sequence TLTIGITDHA…YGEGWIMRIR (83 aa). Residue lysine 65 is modified to N6-lipoyllysine. The interval 111–130 is disordered; sequence DDLEQLLDPEDYQDLVADEE.

This sequence belongs to the GcvH family. The glycine cleavage system is composed of four proteins: P, T, L and H. Requires (R)-lipoate as cofactor.

In terms of biological role, the glycine cleavage system catalyzes the degradation of glycine. The H protein shuttles the methylamine group of glycine from the P protein to the T protein. This is Glycine cleavage system H protein from Alkalilimnicola ehrlichii (strain ATCC BAA-1101 / DSM 17681 / MLHE-1).